Reading from the N-terminus, the 403-residue chain is UPF0229 protein CKR_0568 (403 aa).

The tract at residues 71-109 (SSGVGSGDGSQKKGDRIGKAIKDRDGKGNQGAGNQEGED) is disordered. Positions 80-97 (SQKKGDRIGKAIKDRDGK) are enriched in basic and acidic residues.

This sequence belongs to the UPF0229 family.

This is UPF0229 protein CKR_0568 from Clostridium kluyveri (strain NBRC 12016).